Consider the following 326-residue polypeptide: MTQLDTTTLPDLSAIAGLRARLKQWVRTTPVFDKTDFEPVPGTAVNFKLELLQASGTFKARGAFSNLLALDDDQRAAGVTCVSAGNHAVGVAYAAMRLGIPAKVVMIKTASPARVALCRQYGAEVVLAENGQTAFDTVHRIESEEGRFFVHPFNGYRTVLGTATLGHEWLEQAGALDAVIVPIGGGGLMAGVSTAVKLLAPQCQVIGVEPEGADAMHRSFETGGPVKMGSMQSIADSLMAPHTEQYSYELCRRNVDRLVKVSDDELRAAMRLLFDQLKLATEPACATATAALVGGLKAELAGKRVGVLLCGTNTDAATFARHLGLG.

Monomer. The cofactor is pyridoxal 5'-phosphate.

The enzyme catalyses L-threo-3-phenylserine = 3-phenylpyruvate + NH4(+). With respect to regulation, inhibited by phenylhydrazine, hydroxylamine, p-chloromercuribenzoate, and HgCl(2). In Ralstonia pickettii (Burkholderia pickettii), this protein is Phenylserine dehydratase.